A 64-amino-acid polypeptide reads, in one-letter code: Conotoxin Vc1.3 (64 aa).

The signal sequence occupies residues 1–21; that stretch reads MGMRMMFTVFLLVVLATTVVS. A propeptide spanning residues 22 to 43 is cleaved from the precursor; sequence FTSDRASDGRKAAASDLITLTI. 2 disulfides stabilise this stretch: cysteine 46–cysteine 52 and cysteine 47–cysteine 60. Cysteine 60 is modified (cysteine amide).

It belongs to the conotoxin A superfamily. In terms of tissue distribution, expressed by the venom duct.

It localises to the secreted. May act as a toxin. The protein is Conotoxin Vc1.3 of Conus victoriae (Queen Victoria cone).